The primary structure comprises 75 residues: MNPSEMQRKGPPQRWCLQVYPTAPKRQRPSRTGHDDDGGFVEKKRGKCGEKQERSDCYCVCVERSRHRRLHFVLY.

A disordered region spans residues 22-43 (TAPKRQRPSRTGHDDDGGFVEK). Over residues 32–43 (TGHDDDGGFVEK) the composition is skewed to basic and acidic residues.

Its subcellular location is the nucleus. Its function is as follows. May possess a function in tumorigenesis. The chain is Endogenous retrovirus group K member 5 Np9 protein (ERVK-5) from Homo sapiens (Human).